We begin with the raw amino-acid sequence, 591 residues long: Paralemmin-3 (591 aa).

4 consecutive repeats follow at residues 171–174 (EKNK), 183–186 (EKNQ), 224–227 (EKNQ), and 234–237 (KNQD). Over residues 282-293 (DQTQSTSDQNME) the composition is skewed to polar residues. Disordered regions lie at residues 282–317 (DQTQ…TKDQ), 332–413 (KGTT…QNQD), and 515–591 (PDLK…CVVM). Composition is skewed to basic and acidic residues over residues 306-317 (SQSEGKIQTKDQ) and 349-383 (EPKE…DMDP). Composition is skewed to polar residues over residues 385 to 413 (QLST…QNQD) and 528 to 542 (QESS…TIAQ). The segment covering 543 to 554 (SSSAEGNSSPES) has biased composition (low complexity). Residues 559-575 (QKSQGTDSQQGGNTATQ) show a composition bias toward polar residues. A Nuclear localization signal motif is present at residues 579–583 (RRKKK). S-palmitoyl cysteine attachment occurs at residues Cys-585 and Cys-587. Cys-588 bears the Cysteine methyl ester mark. Residue Cys-588 is the site of S-farnesyl cysteine attachment. The propeptide at 589-591 (VVM) is removed in mature form.

This sequence belongs to the paralemmin family. In terms of processing, may be phosphorylated during oocyte maturation. Palmitoylated on Cys-585 and Cys-587 and prenylated on Cys-588; which is required for membrane association. In Xenopus oocyte, in the central nervous system cells of tadpoles and adult frogs, and transiently in epithelial cells of stomach and gut of tadpoles. Highly expressed in kidney.

It localises to the cytoplasm. It is found in the nucleus. Its subcellular location is the cell membrane. Maternal ATP-binding protein that may have multiple functions during development, one of which may be associated with the development and maintenance of the central nervous system. The protein is Paralemmin-3 (palm3) of Xenopus laevis (African clawed frog).